Here is a 120-residue protein sequence, read N- to C-terminus: Anti-adapter protein IraM (120 aa).

This sequence belongs to the IraM/RssC family.

The protein localises to the cytoplasm. Involved in the stabilization of the sigma stress factor RpoS. This Salmonella typhimurium (strain LT2 / SGSC1412 / ATCC 700720) protein is Anti-adapter protein IraM.